The primary structure comprises 299 residues: Protease HtpX homolog (299 aa).

The next 2 membrane-spanning stretches (helical) occupy residues 7–24 and 29–46; these read GILM…GALI and GAII…FTFW. Residue His130 participates in Zn(2+) binding. Residue Glu131 is part of the active site. His134 is a binding site for Zn(2+). Helical transmembrane passes span 145-165 and 174-194; these read VTAT…FFGG and PVGI…AGLV. A Zn(2+)-binding site is contributed by Glu203.

This sequence belongs to the peptidase M48B family. Zn(2+) serves as cofactor.

The protein resides in the cell inner membrane. This is Protease HtpX homolog from Cereibacter sphaeroides (strain ATCC 17025 / ATH 2.4.3) (Rhodobacter sphaeroides).